The following is an 87-amino-acid chain: DNA-directed RNA polymerase subunit omega (87 aa).

It belongs to the RNA polymerase subunit omega family. In terms of assembly, the RNAP catalytic core consists of 2 alpha, 1 beta, 1 beta' and 1 omega subunit. When a sigma factor is associated with the core the holoenzyme is formed, which can initiate transcription.

The catalysed reaction is RNA(n) + a ribonucleoside 5'-triphosphate = RNA(n+1) + diphosphate. Functionally, promotes RNA polymerase assembly. Latches the N- and C-terminal regions of the beta' subunit thereby facilitating its interaction with the beta and alpha subunits. In Ectopseudomonas mendocina (strain ymp) (Pseudomonas mendocina), this protein is DNA-directed RNA polymerase subunit omega.